A 1039-amino-acid polypeptide reads, in one-letter code: Multidrug resistance protein MdtB (1039 aa).

The next 11 membrane-spanning stretches (helical) occupy residues 15-37 (LFIM…GIIG), 345-362 (FELM…YLFL), 367-389 (ATII…MVFL), 396-418 (LTLM…VIEN), 438-460 (GEIG…PLLF), 472-494 (FAIT…TPMM), 535-557 (HPWL…WVFI), 866-888 (VWLI…ESFI), 908-930 (LMIA…IGIV), 967-989 (ILMT…GVGA), and 999-1021 (MVGG…YLLF).

It belongs to the resistance-nodulation-cell division (RND) (TC 2.A.6) family. MdtB subfamily. Part of a tripartite efflux system composed of MdtA, MdtB and MdtC. MdtB forms a heteromultimer with MdtC.

It localises to the cell inner membrane. The sequence is that of Multidrug resistance protein MdtB from Shigella flexneri.